The following is a 514-amino-acid chain: Cytochrome P450 monooxygenase verB (514 aa).

A helical transmembrane segment spans residues 5–25 (WLSASVLITAVILLVDYLNYY). Cys457 contacts heme.

It belongs to the cytochrome P450 family. Heme serves as cofactor.

It localises to the membrane. The protein operates within mycotoxin biosynthesis. In terms of biological role, cytochrome P450 monooxygenase; part of the gene cluster that mediates the biosynthesis of 11'-deoxyverticillin A, one of the dimeric epipolythiodioxopiperazines (ETPs) from the verticillin family that act as mycotoxins. 11'-deoxyverticillin A is required for normal conidiation. The nonribosomal peptide synthetase verP is speculated to be responsible for condensation of amino acids to form the carbon skeleton of verticillin, whereas the cluster-specific tailoring enzymes are involved in further modifications leading to the production of 11'-deoxyverticillin A. This is Cytochrome P450 monooxygenase verB from Clonostachys rogersoniana.